The chain runs to 355 residues: uncharacterized protein (355 aa).

The transit peptide at 1–49 (MPMTVVSGRFSTALLPTCFSLSRLHSVKYAAQRRVVFVSRSAHASSASV) directs the protein to the chloroplast.

This sequence belongs to the methyltransferase superfamily.

The protein resides in the plastid. Its subcellular location is the chloroplast. It localises to the plastoglobule. This is an uncharacterized protein from Arabidopsis thaliana (Mouse-ear cress).